Here is a 239-residue protein sequence, read N- to C-terminus: MMKLALSQPPFSGTLLMLVVSILLLWEKAASIPACMVEEGDCWDPLQETFNSAIQRAETLCNLADQLYVEFYQNQFSSRQFADLNSKLIKRDETVLKAGIYCHSTLAKPQTRGGNFEIEEHLKMLINFVGSWISPLFHLVIELSAMEGVPETILCKVKDLEENNRQLLDDLRWILTKVSPTAEIREEFPSWEHLSFLKSSNKNNKFLAMFNLSNCLDNDTKFTLHHLRIFKCLITGKDC.

The first 31 residues, 1 to 31 (MMKLALSQPPFSGTLLMLVVSILLLWEKAAS), serve as a signal peptide directing secretion. 2 disulfides stabilise this stretch: C35-C42 and C102-C215. N-linked (GlcNAc...) asparagine glycans are attached at residues N211 and N218. Cysteines 232 and 239 form a disulfide.

This sequence belongs to the somatotropin/prolactin family. Placental basal zone cells.

It is found in the secreted. The sequence is that of Prolactin-8A4 (Prl8a4) from Rattus norvegicus (Rat).